Here is a 76-residue protein sequence, read N- to C-terminus: Dermaseptin-B4 (76 aa).

The first 22 residues, 1–22 (MAFLKKSLFLVLFLGLVSLSIC), serve as a signal peptide directing secretion. Residues 23–43 (EEEKRENKDEIEQEDDEQSEE) constitute a propeptide that is removed on maturation. Gln73 is subject to Glutamine amide. Residues 75–76 (EQ) constitute a propeptide that is removed on maturation.

It belongs to the frog skin active peptide (FSAP) family. Dermaseptin subfamily. In terms of tissue distribution, expressed by the skin glands.

Its subcellular location is the secreted. Its function is as follows. Potent antimicrobial peptide with potent activity against Gram-positive and Gram-negative bacteria. Probably acts by disturbing membrane functions with its amphipathic structure. Has an activity of stimulation of insulin release, which may protect the species from being eaten by predators by causing fatal hypoglycemia. Has hemolytic activity. The sequence is that of Dermaseptin-B4 from Phyllomedusa bicolor (Two-colored leaf frog).